Reading from the N-terminus, the 418-residue chain is tRNA-2-methylthio-N(6)-dimethylallyladenosine synthase (418 aa).

Residues proline 2 to leucine 118 enclose the MTTase N-terminal domain. [4Fe-4S] cluster-binding residues include cysteine 11, cysteine 47, cysteine 81, cysteine 134, cysteine 138, and cysteine 141. One can recognise a Radical SAM core domain in the interval leucine 120 to alanine 352. Positions serine 354–lysine 414 constitute a TRAM domain.

Belongs to the methylthiotransferase family. MiaB subfamily. Monomer. It depends on [4Fe-4S] cluster as a cofactor.

The protein localises to the cytoplasm. The catalysed reaction is N(6)-dimethylallyladenosine(37) in tRNA + (sulfur carrier)-SH + AH2 + 2 S-adenosyl-L-methionine = 2-methylsulfanyl-N(6)-dimethylallyladenosine(37) in tRNA + (sulfur carrier)-H + 5'-deoxyadenosine + L-methionine + A + S-adenosyl-L-homocysteine + 2 H(+). In terms of biological role, catalyzes the methylthiolation of N6-(dimethylallyl)adenosine (i(6)A), leading to the formation of 2-methylthio-N6-(dimethylallyl)adenosine (ms(2)i(6)A) at position 37 in tRNAs that read codons beginning with uridine. The polypeptide is tRNA-2-methylthio-N(6)-dimethylallyladenosine synthase (Dehalococcoides mccartyi (strain ATCC BAA-2266 / KCTC 15142 / 195) (Dehalococcoides ethenogenes (strain 195))).